We begin with the raw amino-acid sequence, 193 residues long: Xanthine phosphoribosyltransferase (193 aa).

Xanthine is bound by residues leucine 20 and threonine 27. 128–132 is a 5-phospho-alpha-D-ribose 1-diphosphate binding site; the sequence is ANGQA. Residue lysine 156 coordinates xanthine.

The protein belongs to the purine/pyrimidine phosphoribosyltransferase family. Xpt subfamily. Homodimer.

It localises to the cytoplasm. The catalysed reaction is XMP + diphosphate = xanthine + 5-phospho-alpha-D-ribose 1-diphosphate. It functions in the pathway purine metabolism; XMP biosynthesis via salvage pathway; XMP from xanthine: step 1/1. Functionally, converts the preformed base xanthine, a product of nucleic acid breakdown, to xanthosine 5'-monophosphate (XMP), so it can be reused for RNA or DNA synthesis. The chain is Xanthine phosphoribosyltransferase from Streptococcus pneumoniae serotype 19F (strain G54).